Here is a 439-residue protein sequence, read N- to C-terminus: MDCFAETEGKRAHDPLYQRRAAAAATPATGVPVDDVDKVVDVPGAVIVGAGPAGVAVGALLGLRGVAYVVLERCGCIASLWRHRTYDRLCLHLPKRFCELPLRPFPASFPEYPTRDQFLGYLDAYAREFGVEPVFRRAVISAEYDGESWWVYTREVVAAAAGGEQAVLGCTMTVYRSRWLVVATGENAEPVVPEMDGAGRFKGQMMHSSEYRNGDGYAGKKVLVVGCGNSGMEVSLDLCNHNARASMVVRDTVHVLPREILGFSTFGLSMWLLRWLSVQTVDWLVLLLSFLVFGDTARLGIPRPSLGPFELKSVSGKTPVLDVGTLAKIKSGDIKVTPAIQCFQEHGVEFVDGSTEEFDVVILATGYKSNVPYWLKEKEFFSEKDGFPRKGNAWKGQNGLYAVGFSRRGLSGVSMDANNIVQDIVQRLHDMGYERSENN.

Residue 49-54 (GAGPAG) participates in FAD binding. An NADP(+)-binding site is contributed by 226-231 (GCGNSG).

It belongs to the FMO family. It depends on FAD as a cofactor.

It carries out the reaction indole-3-pyruvate + NADPH + O2 + H(+) = (indol-3-yl)acetate + CO2 + NADP(+) + H2O. Its function is as follows. Involved in auxin biosynthesis in anthers. This chain is Indole-3-pyruvate monooxygenase YUCCA4, found in Oryza sativa subsp. japonica (Rice).